We begin with the raw amino-acid sequence, 68 residues long: UPF0352 protein CPS_2611 (68 aa).

This sequence belongs to the UPF0352 family.

In Colwellia psychrerythraea (strain 34H / ATCC BAA-681) (Vibrio psychroerythus), this protein is UPF0352 protein CPS_2611.